We begin with the raw amino-acid sequence, 148 residues long: Macrodomain Ter protein (148 aa).

Belongs to the MatP family. In terms of assembly, homodimer.

The protein localises to the cytoplasm. Functionally, required for spatial organization of the terminus region of the chromosome (Ter macrodomain) during the cell cycle. Prevents early segregation of duplicated Ter macrodomains during cell division. Binds specifically to matS, which is a 13 bp signature motif repeated within the Ter macrodomain. The sequence is that of Macrodomain Ter protein from Photobacterium profundum (strain SS9).